A 264-amino-acid chain; its full sequence is S-adenosylmethionine decarboxylase proenzyme (264 aa).

Ser-113 (schiff-base intermediate with substrate; via pyruvic acid) is an active-site residue. Ser-113 is modified (pyruvic acid (Ser); by autocatalysis). Catalysis depends on His-118, which acts as the Proton acceptor; for processing activity. Cys-141 functions as the Proton donor; for catalytic activity in the catalytic mechanism.

It belongs to the prokaryotic AdoMetDC family. Type 2 subfamily. Heterooctamer of four alpha and four beta chains arranged as a tetramer of alpha/beta heterodimers. Pyruvate is required as a cofactor. Post-translationally, is synthesized initially as an inactive proenzyme. Formation of the active enzyme involves a self-maturation process in which the active site pyruvoyl group is generated from an internal serine residue via an autocatalytic post-translational modification. Two non-identical subunits are generated from the proenzyme in this reaction, and the pyruvate is formed at the N-terminus of the alpha chain, which is derived from the carboxyl end of the proenzyme. The post-translation cleavage follows an unusual pathway, termed non-hydrolytic serinolysis, in which the side chain hydroxyl group of the serine supplies its oxygen atom to form the C-terminus of the beta chain, while the remainder of the serine residue undergoes an oxidative deamination to produce ammonia and the pyruvoyl group blocking the N-terminus of the alpha chain.

It carries out the reaction S-adenosyl-L-methionine + H(+) = S-adenosyl 3-(methylsulfanyl)propylamine + CO2. It participates in amine and polyamine biosynthesis; S-adenosylmethioninamine biosynthesis; S-adenosylmethioninamine from S-adenosyl-L-methionine: step 1/1. Functionally, catalyzes the decarboxylation of S-adenosylmethionine to S-adenosylmethioninamine (dcAdoMet), the propylamine donor required for the synthesis of the polyamines spermine and spermidine from the diamine putrescine. This Pseudomonas aeruginosa (strain UCBPP-PA14) protein is S-adenosylmethionine decarboxylase proenzyme.